Consider the following 501-residue polypeptide: Cytochrome P450 71D6 (501 aa).

Residue cysteine 442 coordinates heme.

It belongs to the cytochrome P450 family. Heme serves as cofactor.

This Solanum chacoense (Chaco potato) protein is Cytochrome P450 71D6 (CYP71D6).